The following is a 599-amino-acid chain: Estrogen receptor (599 aa).

The modulating (transactivation AF-1); mediates interaction with MACROD1 stretch occupies residues 1–188 (MTMTLHTKAS…IMESAKETRY (188 aa)). Serine 10 is a glycosylation site (O-linked (GlcNAc) serine). The tract at residues 35 to 47 (MERALGEVYVDNS) is required for interaction with NCOA1. The interaction with DDX5; self-association stretch occupies residues 35-178 (MERALGEVYV…LSSSNEKGNM (144 aa)). The O-linked (GlcNAc) threonine glycan is linked to threonine 50. 2 positions are modified to phosphoserine; by CDK2: serine 108 and serine 110. Serine 122 bears the Phosphoserine mark. The disordered stretch occupies residues 147 to 175 (DTGPPAFYRSNSDNRRQNGRERLSSSNEK). The span at 158-169 (SDNRRQNGRERL) shows a compositional bias: basic and acidic residues. Serine 171 is modified (phosphoserine; by CK2). 2 consecutive NR C4-type zinc fingers follow at residues 189-209 (CAVC…CEGC) and 225-249 (CPAT…LRKC). Positions 189-254 (CAVCNDYASG…RLRKCYEVGM (66 aa)) form a DNA-binding region, nuclear receptor. A mediates interaction with DNTTIP2 region spans residues 189–314 (CAVCNDYASG…TKKNSPALSL (126 aa)). Positions 255–314 (MKGGIRKDRRGGRMLKHKRQRDDLEGRNEMGASGDMRAANLWPSPLVIKHTKKNSPALSL) are hinge. Arginine 264 bears the Asymmetric dimethylarginine; by PRMT1 mark. The interaction with AKAP13 stretch occupies residues 266–599 (GRMLKHKRQR…PEAEGFPNTI (334 aa)). The tract at residues 268–599 (MLKHKRQRDD…PEAEGFPNTI (332 aa)) is self-association. The NR LBD domain maps to 315-551 (TADQMVSALL…DLLLEMLDAH (237 aa)). The tract at residues 315-599 (TADQMVSALL…PEAEGFPNTI (285 aa)) is transactivation AF-2. 17beta-estradiol-binding residues include glutamate 357 and arginine 398. Cysteine 451 carries S-palmitoyl cysteine lipidation. Histidine 528 is a 17beta-estradiol binding site. The residue at position 541 (tyrosine 541) is a Phosphotyrosine; by Tyr-kinases. Residues 557–581 (ASRMGVPPEEPSQTQLATTSSTSAH) form a disordered region. The span at 568–581 (SQTQLATTSSTSAH) shows a compositional bias: low complexity. Residue threonine 575 is glycosylated (O-linked (GlcNAc) threonine).

Belongs to the nuclear hormone receptor family. NR3 subfamily. In terms of assembly, interacts with BCAS3. Binds DNA as a homodimer. Can form a heterodimer with ESR2. Interacts with coactivator NCOA5. Interacts with PELP1, the interaction is enhanced by 17-beta-estradiol; the interaction increases ESR1 transcriptional activity. Interacts with NCOA7; the interaction is ligand-inducible. Interacts with AKAP13, CUEDC2, HEXIM1, KDM5A, MAP1S, SMARD1, and UBE1C. Interacts with MUC1; the interaction is stimulated by 7 beta-estradiol (E2) and enhances ESR1-mediated transcription. Interacts with DNTTIP2, and UIMC1. Interacts with KMT2D/MLL2. Interacts with ATAD2; the interaction is enhanced by estradiol. Interacts with KIF18A and LDB1. Interacts with RLIM (via its C-terminus). Interacts with MACROD1. Interacts with SH2D4A and PLCG. Interacts with SH2D4A; the interaction blocks binding to PLCG and inhibits estrogen-induced cell proliferation. Interacts with DYNLL1. Interacts with CCDC62; the interaction requires estradiol and appears to enhance the transcription of target genes. Interacts with NR2C1; the interaction prevents homodimerization of ESR1 and suppresses its transcriptional activity and cell growth. Interacts with DNAAF4. Interacts with PRMT2. Interacts with RBFOX2. Interacts with EP300; the interaction is estrogen-dependent and enhanced by CITED1. Interacts with CITED1; the interaction is estrogen-dependent. Interacts with FAM120B, FOXL2, PHB2 and SLC30A9. Interacts with coactivators NCOA3 and NCOA6. Interacts with STK3/MST2 only in the presence of SAV1 and vice-versa. Binds to CSNK1D. Interacts with NCOA2; NCOA2 can interact with ESR1 AF-1 and AF-2 domains simultaneously and mediate their transcriptional synergy. Interacts with DDX5. Interacts with NCOA1; the interaction seems to require a self-association of N-terminal and C-terminal regions. Interacts with ZNF366, DDX17, NFKB1, RELA, SP1 and SP3. Interacts with NRIP1. Interacts with GPER1; the interaction occurs in an estrogen-dependent manner. Interacts with CLOCK and the interaction is stimulated by estrogen. Interacts with BCAS3. Interacts with TRIP4 (ufmylated); estrogen dependent. Interacts with LMTK3; the interaction phosphorylates ESR1 (in vitro) and protects it against proteasomal degradation. Interacts with CCAR2 (via N-terminus) in a ligand-independent manner. Interacts with ZFHX3. Interacts with SFR1 in a ligand-dependent and -independent manner. Interacts with DCAF13, LATS1 and DCAF1; regulates ESR1 ubiquitination and ubiquitin-mediated proteasomal degradation. Interacts (via DNA-binding domain) with POU4F2 isoform 2 (C-terminus); this interaction increases the estrogen receptor ESR1 transcriptional activity in a DNA- and ligand 17-beta-estradiol-independent manner. Interacts with ESRRB isoform 1. Interacts with UBE3A and WBP2. Interacts with GTF2B. Interacts with RBM39. In the absence of hormonal ligand, interacts with TACC1. Interacts with PI3KR1 or PI3KR2 and PTK2/FAK1. Interacts with SRC. Interacts with BAG1; the interaction is promoted in the absence of estradiol (17-beta-estradiol/E2). Interacts with and ubiquitinated by STUB1; the interaction is promoted in the absence of estradiol (17-beta-estradiol/E2). Interacts with NEDD8. Post-translationally, phosphorylated by cyclin A/CDK2 and CK1. Phosphorylation probably enhances transcriptional activity. Dephosphorylation at Ser-122 by PPP5C inhibits its transactivation activity. Phosphorylated by LMTK3 (in vitro). In terms of processing, ubiquitinated. Deubiquitinated by OTUB1. Palmitoylated at Cys-451 by ZDHHC7 and ZDHHC21. This modification is required for plasma membrane targeting and for rapid intracellular signaling via ERK and AKT kinases and cAMP generation, but not for signaling mediated by the nuclear hormone receptor. Post-translationally, ubiquitinated; regulated by LATS1 via DCAF1 it leads to ESR1 proteasomal degradation. Deubiquitinated by OTUB1. Ubiquitinated by STUB1/CHIP; in the CA1 hippocampal region following loss of endogenous circulating estradiol (17-beta-estradiol/E2). Ubiquitinated by UBR5, leading to its degradation: UBR5 specifically recognizes and binds ligand-bound ESR1 when it is not associated with coactivators (NCOAs). In presence of NCOAs, the UBR5-degron is not accessible, preventing its ubiquitination and degradation. In terms of processing, dimethylated by PRMT1 at Arg-264. The methylation may favor cytoplasmic localization. Demethylated by JMJD6 at Arg-264.

It localises to the nucleus. The protein resides in the cytoplasm. The protein localises to the golgi apparatus. It is found in the cell membrane. Functionally, nuclear hormone receptor. The steroid hormones and their receptors are involved in the regulation of eukaryotic gene expression and affect cellular proliferation and differentiation in target tissues. Ligand-dependent nuclear transactivation involves either direct homodimer binding to a palindromic estrogen response element (ERE) sequence or association with other DNA-binding transcription factors, such as AP-1/c-Jun, c-Fos, ATF-2, Sp1 and Sp3, to mediate ERE-independent signaling. Ligand binding induces a conformational change allowing subsequent or combinatorial association with multiprotein coactivator complexes through LXXLL motifs of their respective components. Mutual transrepression occurs between the estrogen receptor (ER) and NF-kappa-B in a cell-type specific manner. Decreases NF-kappa-B DNA-binding activity and inhibits NF-kappa-B-mediated transcription from the IL6 promoter and displace RELA/p65 and associated coregulators from the promoter. Recruited to the NF-kappa-B response element of the CCL2 and IL8 promoters and can displace CREBBP. Present with NF-kappa-B components RELA/p65 and NFKB1/p50 on ERE sequences. Can also act synergistically with NF-kappa-B to activate transcription involving respective recruitment adjacent response elements; the function involves CREBBP. Can activate the transcriptional activity of TFF1. Also mediates membrane-initiated estrogen signaling involving various kinase cascades. Essential for MTA1-mediated transcriptional regulation of BRCA1 and BCAS3. Maintains neuronal survival in response to ischemic reperfusion injury when in the presence of circulating estradiol (17-beta-estradiol/E2). In Mus musculus (Mouse), this protein is Estrogen receptor (Esr1).